A 425-amino-acid chain; its full sequence is Divalent metal cation transporter MntH (425 aa).

11 consecutive transmembrane segments (helical) span residues 30 to 50 (LLPF…PGNF), 61 to 81 (GYML…IQSL), 107 to 127 (IGLW…EFIG), 134 to 154 (LLFG…SFAI), 167 to 187 (AGIA…TFFA), 209 to 231 (VLLA…HSAL), 255 to 275 (ILIA…VAAA), 294 to 314 (FGHL…LVAG), 344 to 364 (FITI…TTAL), 365 to 385 (VLSQ…LIMF), and 401 to 421 (ITVV…FLIV).

This sequence belongs to the NRAMP family.

The protein localises to the cell membrane. H(+)-stimulated, divalent metal cation uptake system. Involved in manganese uptake. Can probably also transport cadmium, cobalt, copper and zinc, but not iron. May be the predominant transporter of manganese during logarithmic phase growth. The polypeptide is Divalent metal cation transporter MntH (Bacillus subtilis (strain 168)).